A 961-amino-acid chain; its full sequence is Ubiquitin carboxyl-terminal hydrolase 4 (961 aa).

The DUSP domain maps to 11–122 (PDVETQKTEL…GQQPIVRKVV (112 aa)). The segment at 27-216 (TLQRGAQWYL…LYQGQVLVIE (190 aa)) is necessary for interaction with SART3. Residues 133–141 (VEVYLLELK) carry the Nuclear export signal motif. In terms of domain architecture, Ubiquitin-like 1 spans 142-226 (LCENSDPTNV…PQNEDGTWPR (85 aa)). The interval 219-257 (NEDGTWPRQTLQSKSSTAPSRNFTTSSKPSASPYSSMSA) is disordered. The span at 225–243 (PRQTLQSKSSTAPSRNFTT) shows a compositional bias: polar residues. A required for USP4 activation by providing conformational flexibility between the DUSP and catalytic domains region spans residues 229-295 (LQSKSSTAPS…SYNCQEPPSP (67 aa)). Residues 244–257 (SSKPSASPYSSMSA) are compositionally biased toward low complexity. The USP domain occupies 302-921 (CGLGNLGNTC…AAYVLFYQRR (620 aa)). Cys311 is an active-site residue. The regulates ubiquitin dissociation stretch occupies residues 384–386 (PQF). Residues 405 to 407 (LHE) form a necessary for interaction with RBL2 region. Ser445 is subject to Phosphoserine. The tract at residues 459 to 463 (LVCPE) is necessary for interaction with RB1 and RBL2. Zn(2+) is bound by residues Cys461 and Cys464. The region spanning 483 to 571 (LKKDRIMEVF…IFVYEICTTP (89 aa)) is the Ubiquitin-like 2 domain. Positions 485–773 (KDRIMEVFLV…SQPQKKKKAA (289 aa)) are interacts with DUSP and ubiquitin-like 1 domains and is required for USP4 activation. The segment at 641 to 700 (SSPLEPGACNGSRGSYEGDEEEMDHQEEGKEQLSEVEESGEDSQGGDPTETTQKAKGPPR) is disordered. Phosphoserine occurs at positions 655, 674, and 679. The short motif at 765–770 (QPQKKK) is the Nuclear localization signal element. Zn(2+)-binding residues include Cys797 and Cys800. The active site involves His879. The disordered stretch occupies residues 924 to 961 (ECPSTSSPVSFPGSDGGAKLSSSQQDLGEEEAYTMDTN). A compositionally biased stretch (acidic residues) spans 950–961 (LGEEEAYTMDTN).

Belongs to the peptidase C19 family. USP4 subfamily. Interacts with RB1 (both dephosphorylated and hypophosphorylated forms). Interacts with RBL1 and RBL2. Interacts with ADORA2A (via cytoplasmic C-terminus); the interaction is direct. Interacts with SART3; recruits USP4 to its substrate PRPF3. Phosphorylated at Ser-445 by PKB/AKT1 in response to EGF stimulus, promoting its ability deubiquitinate RHEB. In terms of processing, monoubiquitinated by TRIM21. Ubiquitination does not lead to its proteasomal degradation. Autodeubiquitinated. As to expression, expressed in hippocampus and striatum (at protein level).

It is found in the cytoplasm. The protein resides in the nucleus. The enzyme catalyses Thiol-dependent hydrolysis of ester, thioester, amide, peptide and isopeptide bonds formed by the C-terminal Gly of ubiquitin (a 76-residue protein attached to proteins as an intracellular targeting signal).. With respect to regulation, the completion of the deubiquitinase reaction is mediated by the DUSP and ubiquitin-like 1 domains which promotes the release of ubiquitin from the catalytic site enabling subsequent reactions to occur. Deubiquitinating enzyme that removes conjugated ubiquitin from target proteins. Deubiquitinates PDPK1. Deubiquitinates TRIM21. Deubiquitinates receptor ADORA2A which increases the amount of functional receptor at the cell surface. Deubiquitinates HAS2. Deubiquitinates RHEB in response to EGF signaling, promoting mTORC1 signaling. May regulate mRNA splicing through deubiquitination of the U4 spliceosomal protein PRPF3. This may prevent its recognition by the U5 component PRPF8 thereby destabilizing interactions within the U4/U6.U5 snRNP. May also play a role in the regulation of quality control in the ER. In Rattus norvegicus (Rat), this protein is Ubiquitin carboxyl-terminal hydrolase 4 (Usp4).